The sequence spans 456 residues: Signal recognition particle receptor FtsY (456 aa).

Residues methionine 1–alanine 26 are compositionally biased toward basic and acidic residues. Residues methionine 1 to arginine 163 form a disordered region. Over residues alanine 27–alanine 39 the composition is skewed to acidic residues. The span at glutamate 40–aspartate 62 shows a compositional bias: low complexity. The span at proline 63 to aspartate 81 shows a compositional bias: acidic residues. Positions alanine 82–glutamate 97 are enriched in low complexity. Residues proline 112–glutamate 134 show a composition bias toward acidic residues. Residues glycine 265–threonine 272, aspartate 347–arginine 351, and threonine 405–aspartate 408 contribute to the GTP site.

Belongs to the GTP-binding SRP family. FtsY subfamily. In terms of assembly, part of the signal recognition particle protein translocation system, which is composed of SRP and FtsY.

It localises to the cell membrane. It is found in the cytoplasm. It carries out the reaction GTP + H2O = GDP + phosphate + H(+). Involved in targeting and insertion of nascent membrane proteins into the cytoplasmic membrane. Acts as a receptor for the complex formed by the signal recognition particle (SRP) and the ribosome-nascent chain (RNC). The sequence is that of Signal recognition particle receptor FtsY from Haloferax volcanii (strain ATCC 29605 / DSM 3757 / JCM 8879 / NBRC 14742 / NCIMB 2012 / VKM B-1768 / DS2) (Halobacterium volcanii).